Here is a 673-residue protein sequence, read N- to C-terminus: MSFSDSESSSHGGGGGDYKFFRQISRDRLLHEMLGSTKTGDSKAWKILIMDRVTVKVMSQSCKMADITDQGISLVEELFKRREPMPGMDAIYFIQPSKENIVMFLSDMSGREPLYRKAFIFFSSTIPKELVNHIKSDSSVLPRIGALREMNMEYFPIDNQGFLTDHEQALETLYAEDAENSRHFHICLNIMATRIATVFASLKELPFVRYRAAKSTASRDLVPSKLAAAIWDCISKYKAIPNFPQTETCELLIVDRSVDQIAPIIHEWTYDAMCHDLLDMEGNKHVIEVPSKTGGPPEKKEIVLEDHDPVWLELRHTHIADASERLHEKMTNFASKNKAAQMRSRDGSELSTRDLQKIVQALPQYGEQVDKLSTHVELAGKINRIIRDTGLRDLGQLEQDLVFGDAGAKDVINFLRTNQDTNPENKLRLLMIYATVYPEKFEGDKGVKLMQLARLSPVDMKVISNMQLIAGSPENKAKSGSFSLKFDAGKTKQANRKDRSGEEETWQLFRFYPMIEELLEKLVKGDLSKSDYLCMNQSSHKEESEARTGSVRKSSAPTAVPERKATPHSMRSRRTATWARPHSSDDGYSSDSVLKSASTEFKKLGQRIFVFIIGGATRSELRVCHKLTSSLRREVVLGSTSFDDPPQYITKLKLLSEKDIQGAPAQPFKPQYW.

The interval 538-591 is disordered; the sequence is SSHKEESEARTGSVRKSSAPTAVPERKATPHSMRSRRTATWARPHSSDDGYSSD.

Belongs to the STXBP/unc-18/SEC1 family. Does not bind the syntaxin KNOLLE.

Functionally, involved in the vesicle trafficking. Binds syntaxins. The polypeptide is Protein transport Sec1a (SEC1A) (Arabidopsis thaliana (Mouse-ear cress)).